We begin with the raw amino-acid sequence, 191 residues long: MVSVSQSAQNYFLNLLKKQKYGTNIRVYVKYPGTPVAKCGVSYCYKDDVTRLDVAFTMNKFIVYVYKPHIPYLRESKIDINVEECNSQLTLIAPYANKCYFIKNNDLKRRVENFLNLNINPQLSAHGGKVDLMNITESGYLSLKFSGGCNGCSMVQKTLKEGIEKQILAKFSEFKGVYDITQHNRGNHSYY.

Positions 149 and 152 each coordinate [4Fe-4S] cluster.

Belongs to the NfuA family. As to quaternary structure, homodimer. [4Fe-4S] cluster is required as a cofactor.

In terms of biological role, involved in iron-sulfur cluster biogenesis. Binds a 4Fe-4S cluster, can transfer this cluster to apoproteins, and thereby intervenes in the maturation of Fe/S proteins. Could also act as a scaffold/chaperone for damaged Fe/S proteins. The sequence is that of Fe/S biogenesis protein NfuA from Buchnera aphidicola subsp. Baizongia pistaciae (strain Bp).